We begin with the raw amino-acid sequence, 265 residues long: Neuronal membrane glycoprotein M6-b (265 aa).

A helical membrane pass occupies residues Gly-31–Phe-51. N-linked (GlcNAc...) asparagine glycosylation is present at Asn-73. 2 helical membrane-spanning segments follow: residues Val-90 to Phe-110 and Phe-136 to Val-156. A glycan (N-linked (GlcNAc...) asparagine) is linked at Asn-177. The helical transmembrane segment at Leu-224–Met-244 threads the bilayer. Ser-257 carries the post-translational modification Phosphoserine.

Belongs to the myelin proteolipid protein family. Interacts with SERT. As to expression, neurons and glia; cerebellar Bergmann glia, in glia within white matter tracts of the cerebellum and cerebrum, and in embryonic dorsal root ganglia.

Its subcellular location is the cell membrane. In terms of biological role, may be involved in neural development. Involved in regulation of osteoblast function and bone formation. Involved in matrix vesicle release by osteoblasts; this function seems to involve maintenance of the actin cytoskeleton. May be involved in cellular trafficking of SERT and thereby in regulation of serotonin uptake. The polypeptide is Neuronal membrane glycoprotein M6-b (GPM6B) (Homo sapiens (Human)).